The chain runs to 119 residues: Ribonuclease P protein component (119 aa).

Belongs to the RnpA family. As to quaternary structure, consists of a catalytic RNA component (M1 or rnpB) and a protein subunit.

The catalysed reaction is Endonucleolytic cleavage of RNA, removing 5'-extranucleotides from tRNA precursor.. In terms of biological role, RNaseP catalyzes the removal of the 5'-leader sequence from pre-tRNA to produce the mature 5'-terminus. It can also cleave other RNA substrates such as 4.5S RNA. The protein component plays an auxiliary but essential role in vivo by binding to the 5'-leader sequence and broadening the substrate specificity of the ribozyme. This is Ribonuclease P protein component from Bacillus cereus (strain ZK / E33L).